Reading from the N-terminus, the 403-residue chain is Chromatin structure-remodeling complex subunit rsc58 (403 aa).

The segment covering S376–N389 has biased composition (low complexity). Positions S376–R403 are disordered. A Phosphoserine modification is found at S384.

As to quaternary structure, component of the RSC complex composed of at least arp9, arp42, rsc1, rsc4, rsc7, rsc9, rsc58, sfh1, snf21, ssr1, ssr2, ssr3 and ssr4. The complex interacts with histone and histone variant components of centromeric chromatin.

The protein localises to the cytoplasm. It localises to the nucleus. In terms of biological role, component of the chromatin structure remodeling complex (RSC), which is involved in transcription regulation and nucleosome positioning. Controls particularly membrane and organelle development genes. The protein is Chromatin structure-remodeling complex subunit rsc58 (rsc58) of Schizosaccharomyces pombe (strain 972 / ATCC 24843) (Fission yeast).